The primary structure comprises 773 residues: Pentatricopeptide repeat-containing protein At1g76280 (773 aa).

11 PPR repeats span residues aspartate 130 to proline 165, leucine 166 to lysine 200, asparagine 201 to histidine 231, aspartate 235 to glycine 269, leucine 332 to proline 369, tyrosine 370 to cysteine 400, tyrosine 402 to proline 436, glycine 524 to alanine 558, aspartate 559 to proline 593, lysine 594 to leucine 628, and aspartate 629 to proline 663.

Belongs to the PPR family. P subfamily.

This Arabidopsis thaliana (Mouse-ear cress) protein is Pentatricopeptide repeat-containing protein At1g76280.